The chain runs to 154 residues: Myoglobin (154 aa).

In terms of domain architecture, Globin spans 2 to 148 (GLSDQEWQQV…FRNDMASKYK (147 aa)). His65 contributes to the nitrite binding site. His65 serves as a coordination point for O2. Position 94 (His94) interacts with heme b.

It belongs to the globin family. As to quaternary structure, monomeric.

The protein resides in the cytoplasm. The protein localises to the sarcoplasm. It catalyses the reaction Fe(III)-heme b-[protein] + nitric oxide + H2O = Fe(II)-heme b-[protein] + nitrite + 2 H(+). It carries out the reaction H2O2 + AH2 = A + 2 H2O. Functionally, monomeric heme protein which primary function is to store oxygen and facilitate its diffusion within muscle tissues. Reversibly binds oxygen through a pentacoordinated heme iron and enables its timely and efficient release as needed during periods of heightened demand. Depending on the oxidative conditions of tissues and cells, and in addition to its ability to bind oxygen, it also has a nitrite reductase activity whereby it regulates the production of bioactive nitric oxide. Under stress conditions, like hypoxia and anoxia, it also protects cells against reactive oxygen species thanks to its pseudoperoxidase activity. The sequence is that of Myoglobin (MB) from Cerorhinca monocerata (Rhinoceros auklet).